The sequence spans 210 residues: Glutathione S-transferase P 1 (210 aa).

Residues 2–81 (PPYTIVYFPV…HLGRSLGLYG (80 aa)) form the GST N-terminal domain. Phosphotyrosine; by EGFR is present on Tyr-4. Glutathione-binding positions include Tyr-8, Arg-14, Trp-39, Lys-45, and 52–53 (QL). Thr-62 carries the phosphothreonine modification. Glutathione is bound at residue 65-66 (QS). Residues 83-204 (NQREAAQMDM…SSPEHVNRPI (122 aa)) form the GST C-terminal domain. 2 positions are modified to N6-succinyllysine: Lys-103 and Lys-116. At Lys-128 the chain carries N6-acetyllysine.

Homodimer. Interacts with CDK5. As to expression, ubiquitously expressed.

Its subcellular location is the cytoplasm. It is found in the mitochondrion. The protein resides in the nucleus. The catalysed reaction is RX + glutathione = an S-substituted glutathione + a halide anion + H(+). It carries out the reaction prostaglandin J2 + glutathione = prostaglandin J2-S-(R)-glutathione. The enzyme catalyses prostaglandin J2 + glutathione = prostaglandin J2-S-(S)-glutathione. It catalyses the reaction prostaglandin A2 + glutathione = prostaglandin A2-S-(S)-glutathione. The catalysed reaction is 11(S)-hydroxy-14(S),15(S)-epoxy-(5Z,8Z,12E)-eicosatrienoate + glutathione = (11S,15S)-dihydroxy-14(R)-S-glutathionyl-(5Z,8Z,12E)-eicosatrienoate. Its function is as follows. Conjugation of reduced glutathione to a wide number of exogenous and endogenous hydrophobic electrophiles. Involved in the formation of glutathione conjugates of both prostaglandin A2 (PGA2) and prostaglandin J2 (PGJ2). Participates in the formation of novel hepoxilin regioisomers. Negatively regulates CDK5 activity via p25/p35 translocation to prevent neurodegeneration. This is Glutathione S-transferase P 1 from Mus musculus (Mouse).